We begin with the raw amino-acid sequence, 125 residues long: Small ribosomal subunit protein eS8 (125 aa).

The tract at residues 1–20 is disordered; that stretch reads MLWQGESIRKVTGGRRRPAQ.

It belongs to the eukaryotic ribosomal protein eS8 family. Part of the 30S ribosomal subunit.

The chain is Small ribosomal subunit protein eS8 from Methanoregula boonei (strain DSM 21154 / JCM 14090 / 6A8).